The primary structure comprises 149 residues: Ribonuclease H (149 aa).

One can recognise an RNase H type-1 domain in the interval 1–142 (MSTITIHTDG…ADELAREGLA (142 aa)). Aspartate 9, glutamate 47, aspartate 70, and aspartate 134 together coordinate Mg(2+). The tract at residues 124–149 (HAGDPGNERADELAREGLAEARGRQP) is disordered. The segment covering 129-149 (GNERADELAREGLAEARGRQP) has biased composition (basic and acidic residues).

Belongs to the RNase H family. As to quaternary structure, monomer. Mg(2+) is required as a cofactor.

It is found in the cytoplasm. The catalysed reaction is Endonucleolytic cleavage to 5'-phosphomonoester.. Its function is as follows. Endonuclease that specifically degrades the RNA of RNA-DNA hybrids. In Maricaulis maris (strain MCS10) (Caulobacter maris), this protein is Ribonuclease H.